Reading from the N-terminus, the 542-residue chain is Probable quinate permease (542 aa).

At methionine 1 to tyrosine 22 the chain is on the cytoplasmic side. The chain crosses the membrane as a helical span at residues leucine 23 to glycine 43. Over threonine 44–serine 74 the chain is Extracellular. The chain crosses the membrane as a helical span at residues cysteine 75–glycine 95. Residues arginine 96–lysine 97 lie on the Cytoplasmic side of the membrane. Residues tryptophan 98–asparagine 118 traverse the membrane as a helical segment. At glycine 119–arginine 130 the chain is on the extracellular side. Residues valine 131–methionine 151 traverse the membrane as a helical segment. At alanine 152–arginine 159 the chain is on the cytoplasmic side. A helical transmembrane segment spans residues leucine 160–tyrosine 180. Residues glycine 181–tryptophan 193 are Extracellular-facing. A helical transmembrane segment spans residues isoleucine 194–leucine 214. Topologically, residues lysine 215 to arginine 285 are cytoplasmic. A helical transmembrane segment spans residues leucine 286–tyrosine 306. Topologically, residues tyrosine 307–phenylalanine 325 are extracellular. A helical membrane pass occupies residues serine 326 to isoleucine 346. The Cytoplasmic segment spans residues aspartate 347–arginine 352. A helical membrane pass occupies residues leucine 353–isoleucine 373. Residues lysine 374–threonine 387 lie on the Extracellular side of the membrane. Residues glycine 388–tryptophan 408 traverse the membrane as a helical segment. At asparagine 409–tyrosine 456 the chain is on the cytoplasmic side. A helical membrane pass occupies residues glycine 457–valine 477. Residues proline 478–valine 542 are Extracellular-facing. The tract at residues glycine 523–valine 542 is disordered. The segment covering glutamine 531–valine 542 has biased composition (basic and acidic residues).

It belongs to the major facilitator superfamily. Sugar transporter (TC 2.A.1.1) family. Interacts with creB. Post-translationally, ubiquitinated. Deubiquitinated by creB, probably to control its activity or amount.

The protein localises to the cell membrane. Functionally, integral membrane transporter that imports quinic acid to be catabolized as a carbon source. This Aspergillus fumigatus (strain CBS 144.89 / FGSC A1163 / CEA10) (Neosartorya fumigata) protein is Probable quinate permease (qutD).